The chain runs to 375 residues: Trichodiene synthase (375 aa).

This sequence belongs to the trichodiene synthase family.

The catalysed reaction is (2E,6E)-farnesyl diphosphate = trichodiene + diphosphate. It participates in sesquiterpene biosynthesis; trichothecene biosynthesis. Functionally, TS is a member of the terpene cyclase group of enzymes. It catalyzes the isomerization and cyclization of farnesyl pyro-phosphate to form trichodiene, the first cyclic intermediate in the biosynthetic pathway for trichothecenes. It serves to branch trichothecene biosynthesis from the isoprenoid pathway. The polypeptide is Trichodiene synthase (TRI5) (Fusarium cerealis (Fusarium crookwellense)).